We begin with the raw amino-acid sequence, 883 residues long: MSENIDDIKNEDSKKIKIIKLRKKVVKIVTHNDLNGKNNSNSSINLDKHNNKVEYSQNRDNRAGGYSQNRDNRTGGYSQNRDNRTGGYSQNRDNRTGGYSQNRDNRTGGYSQNRDNRTGGYSQNRDNRTGGYSQNRDNRTGGYSQNRDNRTGGYSQNRDNRTGGYSQNRDNRTGGYSQNRDNRTGGYSQNRDSFPSQYQVSTKKTYVGKNTSQNKYTTTPMSFRRVIKAKVPSIVSSASSVDSENIKELNRKLGEKKKQQQESQKSYKRKKAETESKTIEQKVFEQLQKKKRENLANPIPKSIDIMGSITVSDLARKMNLKSSDLIAKLMALGVMVTINEKIDSDTATILVEEYGSKVNVVSIYDETFIEEEVEDQSKRIEKPPVITIMGHVDHGKTKLLSVLQNIDINQTESGGITQHIGAYTIVYNGREITFLDTPGHEAFTMMRSRGAQVTDIVVLVVSAIDGVMPQTIEAINHAKEANVPIIVAINKIDLPDSNPDKVKHQLSEYDLVPEDWGGDTIFVLISALKNIGISELLDMILLQSDMMLLKANPSKRAIGKVLDAKIDLGRGIVCSVIIEDGTLYIGDSFVGGVCYGKVKALISDKGVSVKSVGPAKAISVLGFSSMPQAGDPFQVTKTEKEAKLISSKRQDLKKYESSKNVKKVTMLNLYDSIKEGALKELKIILKADVQGSVEALKNSLEKLTNDEVRVRVVHSSAGVITETDISFASASDAIVIGFHVRPTSKAQILADQEKVEIRKYNVIYDAISDVKSVLEGMLEPDVEQQFIGFAEVRAVINVPKVGVIAGCYVSRGIIKRDAITNVMRDGLQIHSGKISSLKRFKDDVKEVAEQYECGIMIDNYANIKEGDIIEAFEVKKIKKTFKT.

Residues 32–45 (NDLNGKNNSNSSIN) show a composition bias toward polar residues. 2 disordered regions span residues 32–216 (NDLN…QNKY) and 251–275 (RKLG…AETE). A compositionally biased stretch (basic and acidic residues) spans 46 to 62 (LDKHNNKVEYSQNRDNR). A compositionally biased stretch (polar residues) spans 75–216 (GGYSQNRDNR…VGKNTSQNKY (142 aa)). Over residues 251–260 (RKLGEKKKQQ) the composition is skewed to basic and acidic residues. The region spanning 381 to 554 (EKPPVITIMG…DMMLLKANPS (174 aa)) is the tr-type G domain. Positions 390 to 397 (GHVDHGKT) are G1. A GTP-binding site is contributed by 390-397 (GHVDHGKT). Positions 415-419 (GITQH) are G2. The G3 stretch occupies residues 436–439 (DTPG). GTP contacts are provided by residues 436 to 440 (DTPGH) and 490 to 493 (NKID). Positions 490–493 (NKID) are G4. The G5 stretch occupies residues 526-528 (SAL).

This sequence belongs to the TRAFAC class translation factor GTPase superfamily. Classic translation factor GTPase family. IF-2 subfamily.

The protein resides in the cytoplasm. One of the essential components for the initiation of protein synthesis. Protects formylmethionyl-tRNA from spontaneous hydrolysis and promotes its binding to the 30S ribosomal subunits. Also involved in the hydrolysis of GTP during the formation of the 70S ribosomal complex. This Borrelia garinii subsp. bavariensis (strain ATCC BAA-2496 / DSM 23469 / PBi) (Borreliella bavariensis) protein is Translation initiation factor IF-2.